Consider the following 547-residue polypeptide: CTP synthase (547 aa).

Residues 1–266 (MTKYIFVTGG…GDYLVERLGL (266 aa)) form an amidoligase domain region. Ser-13 contributes to the CTP binding site. Ser-13 serves as a coordination point for UTP. Residue 14-19 (SVGKGI) coordinates ATP. Tyr-54 contributes to the L-glutamine binding site. Asp-71 is a binding site for ATP. Residues Asp-71 and Glu-141 each coordinate Mg(2+). CTP is bound by residues 148-150 (DIE), 187-192 (KTKPTQ), and Lys-223. UTP is bound by residues 187–192 (KTKPTQ) and Lys-223. Positions 291–533 (PIALVGKYVE…IAAAAQTLLA (243 aa)) constitute a Glutamine amidotransferase type-1 domain. Gly-353 contacts L-glutamine. The active-site Nucleophile; for glutamine hydrolysis is Cys-380. Residues 381-384 (LGMQ), Glu-404, and Arg-461 contribute to the L-glutamine site. Catalysis depends on residues His-506 and Glu-508.

This sequence belongs to the CTP synthase family. In terms of assembly, homotetramer.

The catalysed reaction is UTP + L-glutamine + ATP + H2O = CTP + L-glutamate + ADP + phosphate + 2 H(+). The enzyme catalyses L-glutamine + H2O = L-glutamate + NH4(+). It carries out the reaction UTP + NH4(+) + ATP = CTP + ADP + phosphate + 2 H(+). Its pathway is pyrimidine metabolism; CTP biosynthesis via de novo pathway; CTP from UDP: step 2/2. Its activity is regulated as follows. Allosterically activated by GTP, when glutamine is the substrate; GTP has no effect on the reaction when ammonia is the substrate. The allosteric effector GTP functions by stabilizing the protein conformation that binds the tetrahedral intermediate(s) formed during glutamine hydrolysis. Inhibited by the product CTP, via allosteric rather than competitive inhibition. Functionally, catalyzes the ATP-dependent amination of UTP to CTP with either L-glutamine or ammonia as the source of nitrogen. Regulates intracellular CTP levels through interactions with the four ribonucleotide triphosphates. This is CTP synthase from Chloroflexus aggregans (strain MD-66 / DSM 9485).